Consider the following 833-residue polypeptide: Leucine--tRNA ligase (833 aa).

A 'HIGH' region motif is present at residues 41–52; that stretch reads PYPSGAGLHVGH. A 'KMSKS' region motif is present at residues 610–614; sequence KMSKS. ATP is bound at residue Lys-613.

The protein belongs to the class-I aminoacyl-tRNA synthetase family.

Its subcellular location is the cytoplasm. It catalyses the reaction tRNA(Leu) + L-leucine + ATP = L-leucyl-tRNA(Leu) + AMP + diphosphate. The protein is Leucine--tRNA ligase of Streptococcus pyogenes serotype M6 (strain ATCC BAA-946 / MGAS10394).